A 444-amino-acid chain; its full sequence is Divalent metal cation transporter MntH (444 aa).

The next 11 helical transmembrane spans lie at 39–59 (LLFA…GNFA), 69–89 (GYTL…FQAL), 109–128 (FSRP…AMAT), 146–166 (LPLI…LLFE), 175–195 (LVIG…MFIA), 215–235 (TALT…AVYL), 264–284 (VILA…MAAS), 304–324 (TPLL…TSGI), 346–366 (IPVW…ILAG), 372–392 (ALVI…IALI), and 417–437 (AAAI…GFTI).

Belongs to the NRAMP family.

It is found in the cell inner membrane. Functionally, h(+)-stimulated, divalent metal cation uptake system. The chain is Divalent metal cation transporter MntH from Granulibacter bethesdensis (strain ATCC BAA-1260 / CGDNIH1).